The following is a 617-amino-acid chain: V-type proton ATPase catalytic subunit A (617 aa).

Threonine 136 bears the Phosphothreonine mark. Residue 250–257 participates in ATP binding; sequence GAFGCGKT. At serine 384 the chain carries Phosphoserine; by AMPK.

Belongs to the ATPase alpha/beta chains family. In terms of assembly, V-ATPase is a heteromultimeric enzyme made up of two complexes: the ATP-hydrolytic V1 complex and the proton translocation V0 complex. The V1 complex consists of three catalytic AB heterodimers that form a heterohexamer, three peripheral stalks each consisting of EG heterodimers, one central rotor including subunits D and F, and the regulatory subunits C and H. The proton translocation complex V0 consists of the proton transport subunit a, a ring of proteolipid subunits c9c'', rotary subunit d, subunits e and f, and the accessory subunits ATP6AP1/Ac45 and ATP6AP2/PRR. Interacts with the V0 complex V-ATPase subunit a4 ATP6V0A4. Interacts with WFS1. Interacts with alpha-crystallin B chain/CRYAB and with MTOR, forming a ternary complex. In terms of processing, phosphorylation at Ser-384 by AMPK down-regulates its enzyme activity. Expressed in brain (at protein level).

The protein resides in the cytoplasm. It is found in the cytosol. It localises to the cytoplasmic vesicle. The protein localises to the secretory vesicle. Its subcellular location is the clathrin-coated vesicle membrane. The protein resides in the lysosome. It catalyses the reaction ATP + H2O + 4 H(+)(in) = ADP + phosphate + 5 H(+)(out). ATP hydrolysis occurs at the interface between the nucleotide-binding domains of subunits A and B. ATP hydrolysis triggers a conformational change in the subunits D and F, which induces a shift of subunit d. The c-ring is subsequently rotated and results in a continuous proton translocation across the membrane. The V-ATPase is inhibited by bafilomycin A. Functionally, catalytic subunit of the V1 complex of vacuolar(H+)-ATPase (V-ATPase), a multisubunit enzyme composed of a peripheral complex (V1) that hydrolyzes ATP and a membrane integral complex (V0) that translocates protons. V-ATPase is responsible for acidifying and maintaining the pH of intracellular compartments and in some cell types, is targeted to the plasma membrane, where it is responsible for acidifying the extracellular environment. In aerobic conditions, involved in intracellular iron homeostasis, thus triggering the activity of Fe(2+) prolyl hydroxylase (PHD) enzymes, and leading to HIF1A hydroxylation and subsequent proteasomal degradation. May play a role in neurite development and synaptic connectivity. This is V-type proton ATPase catalytic subunit A (ATP6V1A) from Bos taurus (Bovine).